An 84-amino-acid polypeptide reads, in one-letter code: Putative UPF0320 protein YNL337W (84 aa).

The protein belongs to the UPF0320 family.

The polypeptide is Putative UPF0320 protein YNL337W (Saccharomyces cerevisiae (strain ATCC 204508 / S288c) (Baker's yeast)).